The primary structure comprises 254 residues: MTENRTLVLIPARMAATRLPGKPLLDIGGLPMIVHVLRRAEAAGIGRVAVATDTSDIATAVTAHGGEAIMTRADHPSGSDRVFEALGKLDPEGRIDTVVNLQGDFPTIRPGTIREVLQPLADNAVDIATLAAEIHTEEEAANPNVVKAVGSPIGPRRLRALYFTRATAPHGEGPRYHHVGLYAYRREALQRFIELPPSPLEQQERLEQLRALEGGMRIDIMIVDDVPRGVDTATDLETARQIIACSASGEHPAR.

Belongs to the KdsB family.

It is found in the cytoplasm. It carries out the reaction 3-deoxy-alpha-D-manno-oct-2-ulosonate + CTP = CMP-3-deoxy-beta-D-manno-octulosonate + diphosphate. It participates in nucleotide-sugar biosynthesis; CMP-3-deoxy-D-manno-octulosonate biosynthesis; CMP-3-deoxy-D-manno-octulosonate from 3-deoxy-D-manno-octulosonate and CTP: step 1/1. Its pathway is bacterial outer membrane biogenesis; lipopolysaccharide biosynthesis. Activates KDO (a required 8-carbon sugar) for incorporation into bacterial lipopolysaccharide in Gram-negative bacteria. The polypeptide is 3-deoxy-manno-octulosonate cytidylyltransferase (Nitrobacter winogradskyi (strain ATCC 25391 / DSM 10237 / CIP 104748 / NCIMB 11846 / Nb-255)).